We begin with the raw amino-acid sequence, 360 residues long: Peptide chain release factor 1 (360 aa).

Gln235 is modified (N5-methylglutamine). Over residues 285-295 (AQQASEASTRK) the composition is skewed to polar residues. The interval 285–305 (AQQASEASTRKSLIGSGDRSD) is disordered.

It belongs to the prokaryotic/mitochondrial release factor family. Methylated by PrmC. Methylation increases the termination efficiency of RF1.

It localises to the cytoplasm. Peptide chain release factor 1 directs the termination of translation in response to the peptide chain termination codons UAG and UAA. In Thiobacillus denitrificans (strain ATCC 25259 / T1), this protein is Peptide chain release factor 1.